We begin with the raw amino-acid sequence, 754 residues long: 5-methyltetrahydropteroyltriglutamate--homocysteine methyltransferase (754 aa).

5-methyltetrahydropteroyltri-L-glutamate is bound by residues 17–20 and Lys-117; that span reads RELK. L-homocysteine contacts are provided by residues 431–433 and Glu-484; that span reads IGS. Residues 431–433 and Glu-484 each bind L-methionine; that span reads IGS. 5-methyltetrahydropteroyltri-L-glutamate-binding positions include 515-516 and Trp-561; that span reads RC. Asp-599 lines the L-homocysteine pocket. L-methionine is bound at residue Asp-599. Position 605 (Glu-605) interacts with 5-methyltetrahydropteroyltri-L-glutamate. 3 residues coordinate Zn(2+): His-641, Cys-643, and Glu-665. The active-site Proton donor is the His-694. Cys-726 serves as a coordination point for Zn(2+).

It belongs to the vitamin-B12 independent methionine synthase family. It depends on Zn(2+) as a cofactor.

The enzyme catalyses 5-methyltetrahydropteroyltri-L-glutamate + L-homocysteine = tetrahydropteroyltri-L-glutamate + L-methionine. Its pathway is amino-acid biosynthesis; L-methionine biosynthesis via de novo pathway; L-methionine from L-homocysteine (MetE route): step 1/1. In terms of biological role, catalyzes the transfer of a methyl group from 5-methyltetrahydrofolate to homocysteine resulting in methionine formation. The polypeptide is 5-methyltetrahydropteroyltriglutamate--homocysteine methyltransferase (Klebsiella pneumoniae subsp. pneumoniae (strain ATCC 700721 / MGH 78578)).